The sequence spans 785 residues: MLVTAFILWASLLTGAWPATPIQDQLPATPRVRLSFKELKATGTAHFFNFLLNTTDYRILLKDEDHDRMYVGSKDYVLSLDLHDINREPLIIHWAASPQRIEECILSGKDGNGECGNFVRLIQPWNRTHLYVCGTGAYNPMCTYVNRGRRAQALPWTQMQVVRGRGSRATDGADRPTPTAPRQDYIFYLEPEKLESGKGKCPYDPKLDTASALINEELYAGVYIDFMGTDAAIFRTLGKQTAMRTDQYNSRWLNDPSFIHAELIPDSAERNDDKLYFFFRERSAEAPQNPAVYARIGRICLNDDGGHCCLVNKWSTFLKARLVCSVPGEDGIETHFDELQDVFVQQTQDVRNPVIYAVFTSSGSVFRGSAVCVYSMADIRMVFNGPFAHKEGPNYQWMPFSGKMPYPRPGTCPGGTFTPSMKSTKDYPDEVINFMRTHPLMYQAVYPLQRRPLVVRTGAPYRLTTVAVDQVDAADGRYEVLFLGTDRGTVQKVIVLPKDDQEVEELMLEEVEVFKEPAPVKTMTISSKRQQLYVASAVGVTHLSLHRCQAYGAACADCCLARDPYCAWDGQACSRYTASSKRRSRRQDVRHGNPIRQCRGFNSNANKNAVESVQYGVAGSAAFLECQPRSPQATVKWLFQRDPSDRRREIRAEDRFLRTEQGLLLRALQLGDRGLYSCTATENNFKHIVTRVQLHVLGRDAVHAALFPPLAVSVPPPPGTGPPTPPYQELAQLLAQPEVGLIHQYCQGYWRHVPPRPREAPGALRPPELQDQKKPRNRRHHPPDT.

The N-terminal stretch at 1–18 is a signal peptide; that stretch reads MLVTAFILWASLLTGAWP. The Sema domain occupies 31-545; that stretch reads RVRLSFKELK…SAVGVTHLSL (515 aa). An N-linked (GlcNAc...) asparagine glycan is attached at Asn-53. Cys-104 and Cys-115 are disulfide-bonded. Asn-126 carries an N-linked (GlcNAc...) asparagine glycan. 4 cysteine pairs are disulfide-bonded: Cys-133-Cys-142, Cys-300-Cys-412, Cys-324-Cys-372, and Cys-548-Cys-566. The interval 583-602 is disordered; sequence RSRRQDVRHGNPIRQCRGFN. The 91-residue stretch at 605–695 folds into the Ig-like C2-type domain; that stretch reads ANKNAVESVQ…KHIVTRVQLH (91 aa). Cys-678 and Cys-746 are disulfide-bonded. The tract at residues 753-785 is disordered; it reads VPPRPREAPGALRPPELQDQKKPRNRRHHPPDT. Residues 775–785 show a composition bias toward basic residues; sequence PRNRRHHPPDT.

Belongs to the semaphorin family. In terms of tissue distribution, expressed ubiquitously in adulthood. During embryogenesis, expressed in subregions of the central nervous system and various other tissues like skin, kidney, lung and intestine.

The protein resides in the secreted. This is Semaphorin-3F (Sema3f) from Mus musculus (Mouse).